The primary structure comprises 127 residues: Small ribosomal subunit protein uS12 (127 aa).

Positions 1 to 28 (MPTIQQLIRDERSKAKRKTKSPALKQCP) are disordered. D89 is modified (3-methylthioaspartic acid). The segment at 104-127 (ATGVKNRQKARSKYGTKRPKPAAK) is disordered. The segment covering 109–127 (NRQKARSKYGTKRPKPAAK) has biased composition (basic residues).

This sequence belongs to the universal ribosomal protein uS12 family. As to quaternary structure, part of the 30S ribosomal subunit. Contacts proteins S8 and S17. May interact with IF1 in the 30S initiation complex.

In terms of biological role, with S4 and S5 plays an important role in translational accuracy. Functionally, interacts with and stabilizes bases of the 16S rRNA that are involved in tRNA selection in the A site and with the mRNA backbone. Located at the interface of the 30S and 50S subunits, it traverses the body of the 30S subunit contacting proteins on the other side and probably holding the rRNA structure together. The combined cluster of proteins S8, S12 and S17 appears to hold together the shoulder and platform of the 30S subunit. This Microcystis aeruginosa (strain NIES-843 / IAM M-2473) protein is Small ribosomal subunit protein uS12.